The following is a 91-amino-acid chain: Large ribosomal subunit protein bL27 (91 aa).

Over residues 1–10 the composition is skewed to gly residues; the sequence is MAQKKGGGST. Residues 1–20 are disordered; it reads MAQKKGGGSTRNGRDSQPKM.

Belongs to the bacterial ribosomal protein bL27 family.

The polypeptide is Large ribosomal subunit protein bL27 (Verminephrobacter eiseniae (strain EF01-2)).